Consider the following 269-residue polypeptide: Protein MrkE (269 aa).

In terms of domain architecture, Response regulatory spans 59–173 (KVIIVEDEFL…RIINMLQKLT (115 aa)). 4-aspartylphosphate is present on Asp-110. One can recognise an HTH LytTR-type domain in the interval 197–269 (INLIKDERII…VAQVSIANRF (73 aa)).

Its function is as follows. May be involved in the regulation of fimbrial expression. This Klebsiella pneumoniae protein is Protein MrkE (mrkE).